The primary structure comprises 379 residues: Chorismate synthase (379 aa).

Positions 48 and 54 each coordinate NADP(+). FMN contacts are provided by residues 125 to 127 (RSS), 241 to 242 (NA), glycine 286, 301 to 305 (KPTSS), and arginine 327.

This sequence belongs to the chorismate synthase family. Homotetramer. The cofactor is FMNH2.

The enzyme catalyses 5-O-(1-carboxyvinyl)-3-phosphoshikimate = chorismate + phosphate. Its pathway is metabolic intermediate biosynthesis; chorismate biosynthesis; chorismate from D-erythrose 4-phosphate and phosphoenolpyruvate: step 7/7. Catalyzes the anti-1,4-elimination of the C-3 phosphate and the C-6 proR hydrogen from 5-enolpyruvylshikimate-3-phosphate (EPSP) to yield chorismate, which is the branch point compound that serves as the starting substrate for the three terminal pathways of aromatic amino acid biosynthesis. This reaction introduces a second double bond into the aromatic ring system. This chain is Chorismate synthase, found in Rhodospirillum centenum (strain ATCC 51521 / SW).